Consider the following 299-residue polypeptide: Acetaldehyde dehydrogenase 1 (299 aa).

The active-site Acyl-thioester intermediate is the Cys130. NAD(+) contacts are provided by residues 161–169 (SVGPGTRKN) and Asn272.

Belongs to the acetaldehyde dehydrogenase family.

It catalyses the reaction acetaldehyde + NAD(+) + CoA = acetyl-CoA + NADH + H(+). The sequence is that of Acetaldehyde dehydrogenase 1 (mhpF) from Burkholderia cenocepacia (strain ATCC BAA-245 / DSM 16553 / LMG 16656 / NCTC 13227 / J2315 / CF5610) (Burkholderia cepacia (strain J2315)).